The chain runs to 536 residues: Transcriptional regulator RPN4 (536 aa).

Low complexity-rich tracts occupy residues 154-181 (QEQQSQLPQPQQPISQQDKQRPQSQQQQ) and 361-370 (SPSAISPASP). Disordered stretches follow at residues 154 to 196 (QEQQ…TRRR), 353 to 375 (VFDQPKEVSPSAISPASPDSDDM), and 393 to 434 (EEIN…AEIT). Positions 393 to 411 (EEINKKHSKSGKKESKSQK) are enriched in basic and acidic residues. The C2H2-type zinc finger occupies 440–471 (HQCNLINPSTGEPCNKQFSRPYDLIRHQDTIH).

It localises to the nucleus. Functionally, transcriptional activator of a number of genes encoding proteasomal subunits. Binds to the DNA sequence 5'-GAAGGCAAAA-3', enriched in regions upstream of proteasome genes. The chain is Transcriptional regulator RPN4 (RPN4) from Candida albicans (strain SC5314 / ATCC MYA-2876) (Yeast).